Here is a 250-residue protein sequence, read N- to C-terminus: Insertion sequence IS232 putative ATP-binding protein (250 aa).

108-115 (GPSGVGKT) lines the ATP pocket.

It belongs to the IS21/IS1162 putative ATP-binding protein family.

The sequence is that of Insertion sequence IS232 putative ATP-binding protein from Bacillus thuringiensis subsp. berliner.